The chain runs to 309 residues: Foldase protein PrsA 2 (309 aa).

An N-terminal signal peptide occupies residues 1–22 (MKQMNKLITGVVTLATVVTLSA). C23 carries the N-palmitoyl cysteine lipid modification. The S-diacylglycerol cysteine moiety is linked to residue C23. One can recognise a PpiC domain in the interval 146–241 (TPTMTAEIMQ…RTYHIIKVTK (96 aa)).

The protein belongs to the PrsA family.

The protein resides in the cell membrane. It carries out the reaction [protein]-peptidylproline (omega=180) = [protein]-peptidylproline (omega=0). Functionally, plays a major role in protein secretion by helping the post-translocational extracellular folding of several secreted proteins. In Streptococcus pyogenes serotype M3 (strain ATCC BAA-595 / MGAS315), this protein is Foldase protein PrsA 2 (prsA2).